The sequence spans 202 residues: Orotate phosphoribosyltransferase (202 aa).

Residues K93 and 113–121 each bind 5-phospho-alpha-D-ribose 1-diphosphate; that span reads EDIITTGGS. Orotate-binding residues include T117 and R145.

It belongs to the purine/pyrimidine phosphoribosyltransferase family. PyrE subfamily. As to quaternary structure, homodimer. Requires Mg(2+) as cofactor.

It catalyses the reaction orotidine 5'-phosphate + diphosphate = orotate + 5-phospho-alpha-D-ribose 1-diphosphate. The protein operates within pyrimidine metabolism; UMP biosynthesis via de novo pathway; UMP from orotate: step 1/2. Catalyzes the transfer of a ribosyl phosphate group from 5-phosphoribose 1-diphosphate to orotate, leading to the formation of orotidine monophosphate (OMP). In Campylobacter fetus subsp. fetus (strain 82-40), this protein is Orotate phosphoribosyltransferase.